The following is a 436-amino-acid chain: tRNA(Ile)-lysidine synthase (436 aa).

Position 25 to 30 (25 to 30 (SGGLDS)) interacts with ATP.

Belongs to the tRNA(Ile)-lysidine synthase family.

The protein localises to the cytoplasm. It catalyses the reaction cytidine(34) in tRNA(Ile2) + L-lysine + ATP = lysidine(34) in tRNA(Ile2) + AMP + diphosphate + H(+). In terms of biological role, ligates lysine onto the cytidine present at position 34 of the AUA codon-specific tRNA(Ile) that contains the anticodon CAU, in an ATP-dependent manner. Cytidine is converted to lysidine, thus changing the amino acid specificity of the tRNA from methionine to isoleucine. This is tRNA(Ile)-lysidine synthase from Serratia proteamaculans (strain 568).